Reading from the N-terminus, the 199-residue chain is MSARAPKELRLALPPCLLNRTFASHNASGGSSAGLRSSGAGGGTCITQVGQQLFQSFSSTLVLIVLVTLIFCLLVLSLSTFHIHKRRMKKRKMQRAQEEYERDHCSGSHGGGGLPRAGVQAPTHGKETRLERQPRDSAFCTPSNATSSSSSSSSSPGLLCQGPCAPPPPLPAPTPQGAPAASSCLDTPGEGLLQTVVLS.

The first 23 residues, 1–23 (MSARAPKELRLALPPCLLNRTFA), serve as a signal peptide directing secretion. Residues N19 and N26 are each glycosylated (N-linked (GlcNAc...) asparagine). The Extracellular portion of the chain corresponds to 24–60 (SHNASGGSSAGLRSSGAGGGTCITQVGQQLFQSFSST). Residues 61 to 81 (LVLIVLVTLIFCLLVLSLSTF) traverse the membrane as a helical segment. The Cytoplasmic portion of the chain corresponds to 82-199 (HIHKRRMKKR…EGLLQTVVLS (118 aa)). The segment at 93 to 190 (MQRAQEEYER…ASSCLDTPGE (98 aa)) is disordered. 2 stretches are compositionally biased toward basic and acidic residues: residues 95-106 (RAQEEYERDHCS) and 124-135 (HGKETRLERQPR). A compositionally biased stretch (low complexity) spans 147–163 (SSSSSSSSSPGLLCQGP). Residues 164–176 (CAPPPPLPAPTPQ) show a composition bias toward pro residues.

It localises to the membrane. This is an uncharacterized protein from Mus musculus (Mouse).